The sequence spans 309 residues: Porphobilinogen deaminase (309 aa).

An S-(dipyrrolylmethanemethyl)cysteine modification is found at Cys-242.

It belongs to the HMBS family. In terms of assembly, monomer. The cofactor is dipyrromethane.

The enzyme catalyses 4 porphobilinogen + H2O = hydroxymethylbilane + 4 NH4(+). It functions in the pathway porphyrin-containing compound metabolism; protoporphyrin-IX biosynthesis; coproporphyrinogen-III from 5-aminolevulinate: step 2/4. Functionally, tetrapolymerization of the monopyrrole PBG into the hydroxymethylbilane pre-uroporphyrinogen in several discrete steps. This chain is Porphobilinogen deaminase, found in Shewanella woodyi (strain ATCC 51908 / MS32).